The primary structure comprises 284 residues: MEMO1 family protein Mevan_0697 (284 aa).

It belongs to the MEMO1 family.

This is MEMO1 family protein Mevan_0697 from Methanococcus vannielii (strain ATCC 35089 / DSM 1224 / JCM 13029 / OCM 148 / SB).